The chain runs to 313 residues: Biotin synthase (313 aa).

The Radical SAM core domain occupies 28–258 (NFGNDIELCS…LFPQARLRLS (231 aa)). [4Fe-4S] cluster contacts are provided by Cys-46, Cys-50, and Cys-53. [2Fe-2S] cluster is bound by residues Cys-90, Cys-121, Cys-181, and Arg-256.

Belongs to the radical SAM superfamily. Biotin synthase family. As to quaternary structure, homodimer. [4Fe-4S] cluster serves as cofactor. It depends on [2Fe-2S] cluster as a cofactor.

The catalysed reaction is (4R,5S)-dethiobiotin + (sulfur carrier)-SH + 2 reduced [2Fe-2S]-[ferredoxin] + 2 S-adenosyl-L-methionine = (sulfur carrier)-H + biotin + 2 5'-deoxyadenosine + 2 L-methionine + 2 oxidized [2Fe-2S]-[ferredoxin]. It participates in cofactor biosynthesis; biotin biosynthesis; biotin from 7,8-diaminononanoate: step 2/2. Catalyzes the conversion of dethiobiotin (DTB) to biotin by the insertion of a sulfur atom into dethiobiotin via a radical-based mechanism. The sequence is that of Biotin synthase from Francisella philomiragia subsp. philomiragia (strain ATCC 25017 / CCUG 19701 / FSC 153 / O#319-036).